The following is a 295-amino-acid chain: Protoheme IX farnesyltransferase (295 aa).

9 helical membrane-spanning segments follow: residues 8 to 28 (VTKP…FLLA), 35 to 55 (YPLF…GCVF), 84 to 104 (ASLV…WFGA), 107 to 127 (LACW…SLYM), 132 to 152 (VYGT…GYCA), 162 to 182 (AILL…IAIF), 208 to 228 (ITLY…GGYA), 233 to 253 (LVVA…GYKV), and 264 to 284 (FVFS…DFMV).

The protein belongs to the UbiA prenyltransferase family. Protoheme IX farnesyltransferase subfamily.

The protein localises to the cell inner membrane. It catalyses the reaction heme b + (2E,6E)-farnesyl diphosphate + H2O = Fe(II)-heme o + diphosphate. The protein operates within porphyrin-containing compound metabolism; heme O biosynthesis; heme O from protoheme: step 1/1. Its function is as follows. Converts heme B (protoheme IX) to heme O by substitution of the vinyl group on carbon 2 of heme B porphyrin ring with a hydroxyethyl farnesyl side group. The chain is Protoheme IX farnesyltransferase from Klebsiella pneumoniae subsp. pneumoniae (strain ATCC 700721 / MGH 78578).